Here is a 761-residue protein sequence, read N- to C-terminus: Subtilisin-like protease SBT3 (761 aa).

Positions 1 to 22 (MELLHLLLFSWALSAHLFLALA) are cleaved as a signal peptide. A propeptide spanning residues 23–112 (QRSTYIVHLD…AYKDRTVEPH (90 aa)) is cleaved from the precursor. Residues 26 to 110 (TYIVHLDKSL…ISAYKDRTVE (85 aa)) enclose the Inhibitor I9 domain. A Peptidase S8 domain is found at 116 to 606 (TSDFLKLNPS…AGHVDPNRAL (491 aa)). D144 (charge relay system) is an active-site residue. A disulfide bond links C170 and C181. 2 N-linked (GlcNAc...) (complex) asparagine; alternate glycosylation sites follow: N177 and N203. N-linked (GlcNAc...) (paucimannose) asparagine; alternate glycans are attached at residues N177 and N203. The active-site Charge relay system is H215. Residue N376 is glycosylated (N-linked (GlcNAc...) (paucimannose) asparagine; partial). Cysteines 382 and 401 form a disulfide. S538 acts as the Charge relay system in catalysis. A disordered region spans residues 574–598 (LDNTRKPIKDSDNNKAATPLDMGAG). A compositionally biased stretch (basic and acidic residues) spans 575–586 (DNTRKPIKDSDN). An intrachain disulfide couples C624 to C645. Residues N697 and N745 are each glycosylated (N-linked (GlcNAc...) (complex) asparagine; alternate). N-linked (GlcNAc...) (paucimannose) asparagine; alternate glycosylation is found at N697 and N745. The segment at 756 to 761 (PIIEVW) is necessary for prodomain cleavage and secretion.

This sequence belongs to the peptidase S8 family. Homodimer. Post-translationally, propeptide is internally cleaved at Asn-38 and Asp-52 in a pH-dependent manner leading to the dissociation of the propeptide from the catalytic domain and resulting in the release of the active subtilase. Cleavage occurs at pH 5.7 and to a stronger extent at pH 5.2. In terms of tissue distribution, expressed in flowers, cotyledons and leaves with the highest expression in roots.

The protein localises to the secreted. Inhibited by 1 mM 4-(2-aminoethyl)-benzenesulfonyl fluoride (AEBSF), a general inhibitor of serine proteinases, but not by the more selective serine protease inhibitors N-alpha-tosyl-L-lysinyl-chloromethylketone (TLCK), N-tosyl-L-phenylalaninyl-chloromethylketone (TPCK), leupeptin, aprotinin or benzamidine. Its proteolytic activity is autoinhibited by the non-covalent binding of the propeptide to the catalytic domain. No effect on activity by the addition of CaCl(2) or calcium chelators. Its function is as follows. Serine protease. Has preference for Gln in the P1 position and Lys in the P2 position of oligopeptide substrates. Active also with His in the P1 position. Involved in resistance against insects partly by regulating expression of systemic wound response genes and possibly by its post-ingestive activity in the insect gut. Apart from the role in defense, may be involved in regulation of pectin methylesterases (PMEs) activity and pectin methylesterification of the cell wall. The sequence is that of Subtilisin-like protease SBT3 from Solanum lycopersicum (Tomato).